The sequence spans 359 residues: Fructose-bisphosphate aldolase, cytoplasmic isozyme 2 (359 aa).

Positions 52 and 143 each coordinate substrate. Catalysis depends on E184, which acts as the Proton acceptor. The active-site Schiff-base intermediate with dihydroxyacetone-P is the K226.

It belongs to the class I fructose-bisphosphate aldolase family.

Its subcellular location is the cytoplasm. It catalyses the reaction beta-D-fructose 1,6-bisphosphate = D-glyceraldehyde 3-phosphate + dihydroxyacetone phosphate. It functions in the pathway carbohydrate degradation; glycolysis; D-glyceraldehyde 3-phosphate and glycerone phosphate from D-glucose: step 4/4. This Pisum sativum (Garden pea) protein is Fructose-bisphosphate aldolase, cytoplasmic isozyme 2.